The primary structure comprises 268 residues: Fibroblast growth factor 5 (268 aa).

The N-terminal stretch at 1 to 20 (MSLSFLLLLFFSHLILSAWA) is a signal peptide. Residues 26–81 (LAPKGQPGPAATDRNPRGSSSRQSSSSAMSSSSASSSPAASLGSQGSGLEQSSFQW) are disordered. Residues 43–80 (GSSSRQSSSSAMSSSSASSSPAASLGSQGSGLEQSSFQ) are compositionally biased toward low complexity. The N-linked (GlcNAc...) asparagine glycan is linked to N110. A disordered region spans residues 233 to 255 (VPEKKKPPSPIKPKIPLSAPRKN).

Belongs to the heparin-binding growth factors family. As to quaternary structure, interacts with FGFR1 and FGFR2. Affinity between fibroblast growth factors (FGFs) and their receptors is increased by heparan sulfate glycosaminoglycans that function as coreceptors. As to expression, expressed in neonatal brain.

The protein localises to the secreted. In terms of biological role, plays an important role in the regulation of cell proliferation and cell differentiation. Required for normal regulation of the hair growth cycle. Functions as an inhibitor of hair elongation by promoting progression from anagen, the growth phase of the hair follicle, into catagen the apoptosis-induced regression phase. The protein is Fibroblast growth factor 5 (FGF5) of Homo sapiens (Human).